A 386-amino-acid chain; its full sequence is Formate-dependent phosphoribosylglycinamide formyltransferase (386 aa).

N(1)-(5-phospho-beta-D-ribosyl)glycinamide contacts are provided by residues 10–11 (EL) and E70. ATP-binding positions include R102, K143, 148–153 (SSGKGQ), 183–186 (EAFV), and E191. The ATP-grasp domain maps to 107 to 298 (DLAAKELGLK…EFELHLRAIL (192 aa)). 2 residues coordinate Mg(2+): E256 and E268. N(1)-(5-phospho-beta-D-ribosyl)glycinamide-binding positions include D275, K346, and 353 to 354 (RR).

This sequence belongs to the PurK/PurT family. In terms of assembly, homodimer.

The catalysed reaction is N(1)-(5-phospho-beta-D-ribosyl)glycinamide + formate + ATP = N(2)-formyl-N(1)-(5-phospho-beta-D-ribosyl)glycinamide + ADP + phosphate + H(+). It functions in the pathway purine metabolism; IMP biosynthesis via de novo pathway; N(2)-formyl-N(1)-(5-phospho-D-ribosyl)glycinamide from N(1)-(5-phospho-D-ribosyl)glycinamide (formate route): step 1/1. In terms of biological role, involved in the de novo purine biosynthesis. Catalyzes the transfer of formate to 5-phospho-ribosyl-glycinamide (GAR), producing 5-phospho-ribosyl-N-formylglycinamide (FGAR). Formate is provided by PurU via hydrolysis of 10-formyl-tetrahydrofolate. This chain is Formate-dependent phosphoribosylglycinamide formyltransferase, found in Flavobacterium psychrophilum (strain ATCC 49511 / DSM 21280 / CIP 103535 / JIP02/86).